Here is a 330-residue protein sequence, read N- to C-terminus: Ribosomal RNA small subunit methyltransferase H (330 aa).

S-adenosyl-L-methionine is bound by residues 50–52 (GGH), Asp69, Leu103, Asp117, and Gln124.

It belongs to the methyltransferase superfamily. RsmH family.

The protein resides in the cytoplasm. The enzyme catalyses cytidine(1402) in 16S rRNA + S-adenosyl-L-methionine = N(4)-methylcytidine(1402) in 16S rRNA + S-adenosyl-L-homocysteine + H(+). Its function is as follows. Specifically methylates the N4 position of cytidine in position 1402 (C1402) of 16S rRNA. In Saccharopolyspora erythraea (strain ATCC 11635 / DSM 40517 / JCM 4748 / NBRC 13426 / NCIMB 8594 / NRRL 2338), this protein is Ribosomal RNA small subunit methyltransferase H.